The sequence spans 292 residues: Oxidative stress-responsive serine-rich protein 1 (292 aa).

The tract at residues 24–178 is disordered; the sequence is ASGSVASLSV…ATQVPQASLK (155 aa). Positions 65-83 are enriched in basic residues; it reads STRKSSRGAVRTQRRRRSK. Phosphothreonine occurs at positions 143 and 233.

The polypeptide is Oxidative stress-responsive serine-rich protein 1 (OSER1) (Homo sapiens (Human)).